Here is a 231-residue protein sequence, read N- to C-terminus: 2-C-methyl-D-erythritol 4-phosphate cytidylyltransferase (231 aa).

Belongs to the IspD/TarI cytidylyltransferase family. IspD subfamily.

The catalysed reaction is 2-C-methyl-D-erythritol 4-phosphate + CTP + H(+) = 4-CDP-2-C-methyl-D-erythritol + diphosphate. Its pathway is isoprenoid biosynthesis; isopentenyl diphosphate biosynthesis via DXP pathway; isopentenyl diphosphate from 1-deoxy-D-xylulose 5-phosphate: step 2/6. Its function is as follows. Catalyzes the formation of 4-diphosphocytidyl-2-C-methyl-D-erythritol from CTP and 2-C-methyl-D-erythritol 4-phosphate (MEP). In Bacillus licheniformis (strain ATCC 14580 / DSM 13 / JCM 2505 / CCUG 7422 / NBRC 12200 / NCIMB 9375 / NCTC 10341 / NRRL NRS-1264 / Gibson 46), this protein is 2-C-methyl-D-erythritol 4-phosphate cytidylyltransferase.